A 550-amino-acid polypeptide reads, in one-letter code: Dihydroxy-acid dehydratase (550 aa).

Aspartate 78 provides a ligand contact to Mg(2+). Residue cysteine 119 coordinates [2Fe-2S] cluster. Residues aspartate 120 and lysine 121 each contribute to the Mg(2+) site. An N6-carboxylysine modification is found at lysine 121. A [2Fe-2S] cluster-binding site is contributed by cysteine 191. Glutamate 440 provides a ligand contact to Mg(2+). The active-site Proton acceptor is serine 466.

This sequence belongs to the IlvD/Edd family. In terms of assembly, homodimer. [2Fe-2S] cluster is required as a cofactor. It depends on Mg(2+) as a cofactor.

The catalysed reaction is (2R)-2,3-dihydroxy-3-methylbutanoate = 3-methyl-2-oxobutanoate + H2O. It carries out the reaction (2R,3R)-2,3-dihydroxy-3-methylpentanoate = (S)-3-methyl-2-oxopentanoate + H2O. It participates in amino-acid biosynthesis; L-isoleucine biosynthesis; L-isoleucine from 2-oxobutanoate: step 3/4. Its pathway is amino-acid biosynthesis; L-valine biosynthesis; L-valine from pyruvate: step 3/4. Its function is as follows. Functions in the biosynthesis of branched-chain amino acids. Catalyzes the dehydration of (2R,3R)-2,3-dihydroxy-3-methylpentanoate (2,3-dihydroxy-3-methylvalerate) into 2-oxo-3-methylpentanoate (2-oxo-3-methylvalerate) and of (2R)-2,3-dihydroxy-3-methylbutanoate (2,3-dihydroxyisovalerate) into 2-oxo-3-methylbutanoate (2-oxoisovalerate), the penultimate precursor to L-isoleucine and L-valine, respectively. The protein is Dihydroxy-acid dehydratase of Methanococcus maripaludis (strain C6 / ATCC BAA-1332).